A 500-amino-acid chain; its full sequence is Glycerol kinase (500 aa).

Threonine 11 is a binding site for ADP. 3 residues coordinate ATP: threonine 11, threonine 12, and serine 13. Threonine 11 is a binding site for sn-glycerol 3-phosphate. Arginine 15 serves as a coordination point for ADP. Residues arginine 81, glutamate 82, tyrosine 133, and aspartate 242 each coordinate sn-glycerol 3-phosphate. Residues arginine 81, glutamate 82, tyrosine 133, aspartate 242, and glutamine 243 each coordinate glycerol. ADP-binding residues include threonine 264 and glycine 307. ATP contacts are provided by threonine 264, glycine 307, glutamine 311, and glycine 411. Glycine 411 contacts ADP.

The protein belongs to the FGGY kinase family.

The catalysed reaction is glycerol + ATP = sn-glycerol 3-phosphate + ADP + H(+). Its pathway is polyol metabolism; glycerol degradation via glycerol kinase pathway; sn-glycerol 3-phosphate from glycerol: step 1/1. Inhibited by fructose 1,6-bisphosphate (FBP). Functionally, key enzyme in the regulation of glycerol uptake and metabolism. Catalyzes the phosphorylation of glycerol to yield sn-glycerol 3-phosphate. The polypeptide is Glycerol kinase (Bradyrhizobium diazoefficiens (strain JCM 10833 / BCRC 13528 / IAM 13628 / NBRC 14792 / USDA 110)).